Reading from the N-terminus, the 129-residue chain is D-ribose pyranase (129 aa).

Catalysis depends on H20, which acts as the Proton donor. Residues D28, H96, and 118 to 120 each bind substrate; that span reads YAN.

The protein belongs to the RbsD / FucU family. RbsD subfamily. In terms of assembly, homodecamer.

The protein localises to the cytoplasm. It catalyses the reaction beta-D-ribopyranose = beta-D-ribofuranose. It functions in the pathway carbohydrate metabolism; D-ribose degradation; D-ribose 5-phosphate from beta-D-ribopyranose: step 1/2. In terms of biological role, catalyzes the interconversion of beta-pyran and beta-furan forms of D-ribose. This Halalkalibacterium halodurans (strain ATCC BAA-125 / DSM 18197 / FERM 7344 / JCM 9153 / C-125) (Bacillus halodurans) protein is D-ribose pyranase.